The sequence spans 749 residues: Transcription factor RFX3 (749 aa).

Positions 183–258 (HLQWLLDNYE…YHYYGIRVKP (76 aa)) form a DNA-binding region, RFX-type winged-helix. The tract at residues 663–699 (VSPGNLDKDEGSEVESEMDEELDDSSEPQAKREKTEL) is disordered. Over residues 674-688 (SEVESEMDEELDDSS) the composition is skewed to acidic residues.

It belongs to the RFX family. In terms of assembly, heterodimer; heterodimerizes with RFX1 and RFX2, and RFX6.

It is found in the nucleus. Its function is as follows. Transcription factor required for ciliogenesis and islet cell differentiation during endocrine pancreas development. Essential for the differentiation of nodal monocilia and left-right asymmetry specification during embryogenesis. Required for the biogenesis of motile cilia by governing growth and beating efficiency of motile cells. Also required for ciliated ependymal cell differentiation. Regulates the expression of genes involved in ciliary assembly (DYNC2LI1, FOXJ1 and BBS4) and genes involved in ciliary motility (DNAH11, DNAH9 and DNAH5). Together with RFX6, participates in the differentiation of 4 of the 5 islet cell types during endocrine pancreas development, with the exception of pancreatic PP (polypeptide-producing) cells. Regulates transcription by forming a heterodimer with another RFX protein and binding to the X-box in the promoter of target genes. Represses transcription of MAP1A in non-neuronal cells but not in neuronal cells. The chain is Transcription factor RFX3 (RFX3) from Macaca fascicularis (Crab-eating macaque).